The following is a 207-amino-acid chain: Urease accessory protein UreG (207 aa).

14–21 lines the GTP pocket; it reads GPVGSGKT.

The protein belongs to the SIMIBI class G3E GTPase family. UreG subfamily. In terms of assembly, homodimer. UreD, UreF and UreG form a complex that acts as a GTP-hydrolysis-dependent molecular chaperone, activating the urease apoprotein by helping to assemble the nickel containing metallocenter of UreC. The UreE protein probably delivers the nickel.

The protein resides in the cytoplasm. Facilitates the functional incorporation of the urease nickel metallocenter. This process requires GTP hydrolysis, probably effectuated by UreG. The protein is Urease accessory protein UreG of Tolumonas auensis (strain DSM 9187 / NBRC 110442 / TA 4).